Reading from the N-terminus, the 321-residue chain is uncharacterized protein (321 aa).

This sequence belongs to the carbohydrate kinase PfkB family.

This is an uncharacterized protein from Escherichia coli (strain K12).